We begin with the raw amino-acid sequence, 234 residues long: uncharacterized protein (234 aa).

4 helical membrane-spanning segments follow: residues 28–48 (IVII…SIIS), 67–87 (FQIF…FDPI), 123–143 (GGVD…SGTI), and 154–174 (LYCI…GLLY).

The protein belongs to the complex I subunit 2 family.

It localises to the mitochondrion membrane. This is an uncharacterized protein from Neurospora crassa (strain ATCC 24698 / 74-OR23-1A / CBS 708.71 / DSM 1257 / FGSC 987).